Here is a 387-residue protein sequence, read N- to C-terminus: Succinate--CoA ligase [ADP-forming] subunit beta (387 aa).

Positions 9–244 (KEVLRKFGVA…LNEEEPSEIE (236 aa)) constitute an ATP-grasp domain. ATP is bound by residues Lys-46, 53 to 55 (GRG), Glu-99, Cys-102, and Glu-107. Mg(2+) contacts are provided by Asn-199 and Asp-213. Substrate-binding positions include Asn-264 and 321–323 (GIM).

It belongs to the succinate/malate CoA ligase beta subunit family. As to quaternary structure, heterotetramer of two alpha and two beta subunits. It depends on Mg(2+) as a cofactor.

It catalyses the reaction succinate + ATP + CoA = succinyl-CoA + ADP + phosphate. The catalysed reaction is GTP + succinate + CoA = succinyl-CoA + GDP + phosphate. It participates in carbohydrate metabolism; tricarboxylic acid cycle; succinate from succinyl-CoA (ligase route): step 1/1. Succinyl-CoA synthetase functions in the citric acid cycle (TCA), coupling the hydrolysis of succinyl-CoA to the synthesis of either ATP or GTP and thus represents the only step of substrate-level phosphorylation in the TCA. The beta subunit provides nucleotide specificity of the enzyme and binds the substrate succinate, while the binding sites for coenzyme A and phosphate are found in the alpha subunit. This chain is Succinate--CoA ligase [ADP-forming] subunit beta, found in Bdellovibrio bacteriovorus (strain ATCC 15356 / DSM 50701 / NCIMB 9529 / HD100).